Consider the following 420-residue polypeptide: Melatonin receptor type 1C (420 aa).

Residues 1–34 are Extracellular-facing; the sequence is MMEVNSTCLDCRTPGTIRTEQDAQDSASQGLTSA. An N-linked (GlcNAc...) asparagine glycan is attached at Asn-5. Residues 35–55 traverse the membrane as a helical segment; that stretch reads LAVVLIFTIVVDVLGNILVIL. Residues 56–73 lie on the Cytoplasmic side of the membrane; sequence SVLRNKKLQNAGNLFVVS. A helical transmembrane segment spans residues 74 to 94; the sequence is LSIADLVVAVYPYPVILIAIF. Residues 95 to 106 lie on the Extracellular side of the membrane; it reads QNGWTLGNIHCQ. Cys-105 and Cys-182 are oxidised to a cystine. Residues 107–127 form a helical membrane-spanning segment; that stretch reads ISGFLMGLSVIGSVFNITAIA. Residues 128 to 152 are Cytoplasmic-facing; that stretch reads INRYCYICHSLRYDKLYNQRSTWCY. The chain crosses the membrane as a helical span at residues 153–173; the sequence is LGLTWILTIIAIVPNFFVGSL. Residues 174–192 lie on the Extracellular side of the membrane; that stretch reads QYDPRIFSCTFAQTVSSSY. Residues 193 to 213 traverse the membrane as a helical segment; that stretch reads TITVVVVHFIVPLSVVTFCYL. Residues 214-245 lie on the Cytoplasmic side of the membrane; the sequence is RIWVLVIQVKHRVRQDFKQKLTQTDLRNFLTM. The chain crosses the membrane as a helical span at residues 246-266; it reads FVVFVLFAVCWAPLNFIGLAV. Over 267-279 the chain is Extracellular; that stretch reads AINPFHVAPKIPE. A helical transmembrane segment spans residues 280 to 303; that stretch reads WLFVLSYFMAYFNSCLNAVIYGVL. At 304 to 420 the chain is on the cytoplasmic side; the sequence is NQNFRKEYKR…ELCKDGISQR (117 aa).

Belongs to the G-protein coupled receptor 1 family. As to expression, moderately expressed in dermal melanophores.

The protein localises to the cell membrane. Its function is as follows. High affinity receptor for melatonin. Likely to mediate the potent effects of melatonin on pigment aggregation in melanophores. The activity of this receptor is mediated by pertussis toxin sensitive G proteins that inhibit adenylate cyclase activity. In Xenopus laevis (African clawed frog), this protein is Melatonin receptor type 1C (mtnr1c).